A 360-amino-acid chain; its full sequence is Dynein intermediate light chain dil1 (360 aa).

The protein belongs to the dynein light intermediate chain DYN3 family. In terms of assembly, the dynein complex consists of at least two heavy chains and a number of intermediate and light chains. Interacts with rga3, sec10, sec16, syp1, rvb2, spbc19c7.04c, spbc2f12.05 and spac3a11.10c. The N-terminal part is acetylated.

The protein localises to the cytoplasm. Its subcellular location is the cytoskeleton. Component of the cytoplasmic dynein which acts as a motor for the intracellular retrograde motility of vesicles and organelles along microtubules. Promotes oscillatory nuclear movement and efficient pairing of homologous centromeres during meiotic prophase. This Schizosaccharomyces pombe (strain 972 / ATCC 24843) (Fission yeast) protein is Dynein intermediate light chain dil1 (dil1).